Reading from the N-terminus, the 387-residue chain is UDP-N-acetylglucosamine--N-acetylmuramyl-(pentapeptide) pyrophosphoryl-undecaprenol N-acetylglucosamine transferase (387 aa).

Residues 14–16 (TGG), asparagine 124, arginine 167, serine 195, and glutamine 296 each bind UDP-N-acetyl-alpha-D-glucosamine. The interval 366 to 387 (LPQQNSIEEDSTFEKNQEGAVA) is disordered. Positions 377-387 (TFEKNQEGAVA) are enriched in basic and acidic residues.

This sequence belongs to the glycosyltransferase 28 family. MurG subfamily.

The protein resides in the cell inner membrane. The catalysed reaction is di-trans,octa-cis-undecaprenyl diphospho-N-acetyl-alpha-D-muramoyl-L-alanyl-D-glutamyl-meso-2,6-diaminopimeloyl-D-alanyl-D-alanine + UDP-N-acetyl-alpha-D-glucosamine = di-trans,octa-cis-undecaprenyl diphospho-[N-acetyl-alpha-D-glucosaminyl-(1-&gt;4)]-N-acetyl-alpha-D-muramoyl-L-alanyl-D-glutamyl-meso-2,6-diaminopimeloyl-D-alanyl-D-alanine + UDP + H(+). The protein operates within cell wall biogenesis; peptidoglycan biosynthesis. Its function is as follows. Cell wall formation. Catalyzes the transfer of a GlcNAc subunit on undecaprenyl-pyrophosphoryl-MurNAc-pentapeptide (lipid intermediate I) to form undecaprenyl-pyrophosphoryl-MurNAc-(pentapeptide)GlcNAc (lipid intermediate II). The chain is UDP-N-acetylglucosamine--N-acetylmuramyl-(pentapeptide) pyrophosphoryl-undecaprenol N-acetylglucosamine transferase from Zymomonas mobilis subsp. mobilis (strain ATCC 31821 / ZM4 / CP4).